A 491-amino-acid chain; its full sequence is MTYAESTRSAVVYSSIVPPPRTPVGPPMLKDGVRKGSASQPLQPKNGANSLDYWSKSEDEKSGITCYYSRHNIQFPPPQRKMKPVKPNPVGRSTINGFTPSTSSPQNGLRYPPFPQNTPESVMSPPVGIYRNIPAMPRAKLTKDEKNGGKMNRDGGGENPKNVVWGGTSRKDDDTASTPLNSFSANASIEKKRSTARRKPRWARCFQTLFCCVTPPREIEKIQSSQRTNSTNNNHQNGRPSTPTNTGPPIQLITQVHRDGTVTGLPTTGQACQQNGSGDGVTPYDKIANDSVGTINEKPLLPPLLPQDSNKKCLVIDLDETLVHSSFKPVKNPDFVIPVEIDGVEHQVYVLKRPYVDEFLAKVGEHFECILFTASLAKYADPVADLLDKKRVFRGRLFREACVFHKGNYVKDLSRLGRNLNQTLIIDNSPASYAFHPENAVPVTTWFDDPSDTELLDILPSLEHLNGFSSIYDLYRPEEGPQSELLNHCSC.

Disordered stretches follow at residues 1-53, 140-198, 221-249, and 261-282; these read MTYA…SLDY, KLTK…TARR, KIQSSQRTNSTNNNHQNGRPSTPTNTGPP, and TVTGLPTTGQACQQNGSGDGVT. Positions 17 to 26 are enriched in pro residues; it reads VPPPRTPVGP. Over residues 37–49 the composition is skewed to polar residues; it reads SASQPLQPKNGAN. Basic and acidic residues predominate over residues 141–156; that stretch reads LTKDEKNGGKMNRDGG. Over residues 176–187 the composition is skewed to polar residues; it reads ASTPLNSFSANA. Residues 223-237 show a composition bias toward low complexity; the sequence is QSSQRTNSTNNNHQN. Composition is skewed to polar residues over residues 238 to 249 and 264 to 276; these read GRPSTPTNTGPP and GLPTTGQACQQNG. An FCP1 homology domain is found at 307 to 465; the sequence is QDSNKKCLVI…LDILPSLEHL (159 aa). Aspartate 317 acts as the 4-aspartylphosphate intermediate in catalysis. Mg(2+) contacts are provided by aspartate 317, aspartate 319, and asparagine 428. Aspartate 319 functions as the Proton donor in the catalytic mechanism.

As to quaternary structure, may interact (via phosphatase domain) with cpna-1. Isoform a and isoform b may interact with lim-9 (via LIM zinc-binding domain). Isoform a and isoform b may interact (via FCP1 homology domain) with unc-89 (via fibronectin type-III domain 1, Ig-like C2-type domain 48/49 and protein kinase domain 1 or Ig-like C2-type domain 50, fibronectin type-III domain 2 and protein kinase domain 2); the interaction may act as a molecular bridge to bring two unc-89 molecules together or to stabilize a loop between the 2 protein kinase domains. The cofactor is Mg(2+). Expressed in pharyngeal, vulval and body wall muscles.

Its subcellular location is the cytoplasm. It is found in the myofibril. The protein resides in the sarcomere. It localises to the m line. It carries out the reaction O-phospho-L-seryl-[protein] + H2O = L-seryl-[protein] + phosphate. It catalyses the reaction O-phospho-L-threonyl-[protein] + H2O = L-threonyl-[protein] + phosphate. Inhibited by beryllium trifluoride (BeF(3-)) and tetrafluoroaluminate (AlF(4-)) but not by sodium fluoride (NaF) or sodium orthovanadate (Na3VO4). Functionally, phosphatase which may play a role in the egg laying muscles. The polypeptide is CTD small phosphatase-like protein 1 (Caenorhabditis elegans).